Reading from the N-terminus, the 935-residue chain is Isoleucine--tRNA ligase (935 aa).

Residues 58 to 68 carry the 'HIGH' region motif; sequence PYANGSIHVGH. Residue glutamate 558 coordinates L-isoleucyl-5'-AMP. Residues 599 to 603 carry the 'KMSKS' region motif; sequence KMSKS. Residue lysine 602 participates in ATP binding. Residues cysteine 897, cysteine 900, cysteine 917, and cysteine 920 each contribute to the Zn(2+) site.

Belongs to the class-I aminoacyl-tRNA synthetase family. IleS type 1 subfamily. In terms of assembly, monomer. The cofactor is Zn(2+).

It localises to the cytoplasm. It catalyses the reaction tRNA(Ile) + L-isoleucine + ATP = L-isoleucyl-tRNA(Ile) + AMP + diphosphate. In terms of biological role, catalyzes the attachment of isoleucine to tRNA(Ile). As IleRS can inadvertently accommodate and process structurally similar amino acids such as valine, to avoid such errors it has two additional distinct tRNA(Ile)-dependent editing activities. One activity is designated as 'pretransfer' editing and involves the hydrolysis of activated Val-AMP. The other activity is designated 'posttransfer' editing and involves deacylation of mischarged Val-tRNA(Ile). The chain is Isoleucine--tRNA ligase from Francisella tularensis subsp. tularensis (strain WY96-3418).